A 184-amino-acid chain; its full sequence is Cytochrome c homolog (184 aa).

The Cytoplasmic portion of the chain corresponds to Met-1–Leu-10. The chain crosses the membrane as a helical; Signal-anchor span at residues Gly-11–Phe-31. The Periplasmic portion of the chain corresponds to Ser-32 to Lys-184. Heme c-binding residues include Cys-84, Cys-87, His-88, and Met-151.

Belongs to the cytochrome c family. Post-translationally, binds 1 heme c group covalently per subunit.

Its subcellular location is the cell membrane. Functionally, may be involved in electron transfer from bc1 complex to aa3. In Bradyrhizobium diazoefficiens (strain JCM 10833 / BCRC 13528 / IAM 13628 / NBRC 14792 / USDA 110), this protein is Cytochrome c homolog (cycM).